Reading from the N-terminus, the 747-residue chain is MIQLQNTFIFIALTIFTSASTTSLKNETKPLNTISTLAAQTNISNPEEDLFDTNGAPKSDTVNASTTTDRHKIPRWVNEQKMQKRLHAEPAGNTVQFRCAVQGARPITVDWYKDGEPIKKNGRLGGYKFRQRNQQISLESVIMSDRAKYMCVAHNKYGSINHTYELDVVARIPIPPVLSADGMKNQTVKVGSTVTFRCRIVYSDAHPHVEWLKYNVNVTVLKRAGINTTDAEMEKLTLKNVSFADAGEYTCLAGNSIGVSHVSAWLTVLPVVDENDVWTEEIPQDTHYLIYIFGVVCFIILLAFIVYMCNSRYQNKDPPRLIPIENPDNIPPMSKMEEPVMLFGNEQAWRRMCLPHADHIEINIQPDLQWELKREDILLHERIDEGFFGQVFRADLIRCAGGRKEKVDAAVKMLKSTRTEKDMLDLLTEMDQMKRVGKHKNIVNLLGVCTQNGILWLVTEYAQKGNLRDYLRRNRPSELQYELSTPDSPAPPRDEPLTLRALMSASHQVARGMEYLSQKKCIHRDLAARNVLVANDFVMKIADFGLARDIRSNDYYRKETRGHLPYKWMALEAMTDNMFTHATDVWSFGILLWEIFSLGGSPYPGVKTHDLVRFLRNGDRLEQPQFASSELYRLMRDCWEESPRRRPQFRQLVEDLDRMLASSSSLEYIDLNSPCEADYLPSDVDSNEDTESRDSANATGEDSDSVFEPIDGHGAHAYEVDEAGPLLNPQPDANIVCNGHARMQSDV.

The first 24 residues, 1–24 (MIQLQNTFIFIALTIFTSASTTSL), serve as a signal peptide directing secretion. The Extracellular segment spans residues 25-288 (KNETKPLNTI…TEEIPQDTHY (264 aa)). Asn26, Asn42, and Asn63 each carry an N-linked (GlcNAc...) asparagine glycan. Residues 47 to 68 (EEDLFDTNGAPKSDTVNASTTT) form a disordered region. 2 Ig-like C2-type domains span residues 74 to 167 (PRWV…YELD) and 175 to 267 (PPVL…AWLT). A disulfide bridge links Cys99 with Cys151. Residues Asn161, Asn185, Asn217, Asn227, and Asn240 are each glycosylated (N-linked (GlcNAc...) asparagine). Cys198 and Cys251 are joined by a disulfide. Residues 289–309 (LIYIFGVVCFIILLAFIVYMC) form a helical membrane-spanning segment. Residues 310–747 (NSRYQNKDPP…NGHARMQSDV (438 aa)) lie on the Cytoplasmic side of the membrane. Residues 377 to 660 (ILLHERIDEG…QLVEDLDRML (284 aa)) form the Protein kinase domain. ATP-binding positions include 383 to 391 (IDEGFFGQV) and Lys412. The Proton acceptor role is filled by Asp525. Position 556 is a phosphotyrosine; by autocatalysis (Tyr556). Residues 679–731 (YLPSDVDSNEDTESRDSANATGEDSDSVFEPIDGHGAHAYEVDEAGPLLNPQP) form a disordered region. The segment covering 710 to 719 (IDGHGAHAYE) has biased composition (basic and acidic residues).

Belongs to the protein kinase superfamily. Tyr protein kinase family. Fibroblast growth factor receptor subfamily.

It localises to the membrane. The catalysed reaction is L-tyrosyl-[protein] + ATP = O-phospho-L-tyrosyl-[protein] + ADP + H(+). Receptor for basic fibroblast growth factor. The sequence is that of Fibroblast growth factor receptor (FGFR) from Ciona intestinalis (Transparent sea squirt).